A 290-amino-acid polypeptide reads, in one-letter code: Programmed cell death 1 ligand 1 (290 aa).

Positions 1–18 (MRIFAGIIFTACCHLLRA) are cleaved as a signal peptide. The Ig-like V-type domain occupies 19–127 (FTITAPKDLY…YGGADYKRIT (109 aa)). Topologically, residues 19-239 (FTITAPKDLY…ATHPPQNRTH (221 aa)) are extracellular. An N-linked (GlcNAc...) asparagine glycan is attached at Asn-35. Cystine bridges form between Cys-40-Cys-114 and Cys-154-Cys-208. An Ig-like C2-type domain is found at 133-224 (PYRKINQRIS…PGQNHTAELI (92 aa)). N-linked (GlcNAc...) asparagine glycans are attached at residues Asn-191, Asn-199, Asn-218, and Asn-236. The chain crosses the membrane as a helical span at residues 240–260 (WVLLGSILLFLIVVSTVLLFL). Residues 261–290 (RKQVRMLDVEKCGVEDTSSKNRNDTQFEET) are Cytoplasmic-facing.

It belongs to the immunoglobulin superfamily. BTN/MOG family. As to quaternary structure, interacts with PDCD1. Interacts with CMTM4 and CMTM6. Interacts with CD80. In terms of processing, ubiquitinated; STUB1 likely mediates polyubiquitination of PD-L1/CD274 triggering its degradation. Ubiquitinated by MARCHF8; leading to degradation. Deubiquitinated by USP22; leading to stabilization. As to expression, highly expressed in the heart, thymus, skeletal muscle, and lung. Weakly expressed in the kidney, spleen, thyroid, and liver. Expressed on activated dendritic cells, B-cells and macrophages. Expressed in numerous tumor cells lines of lymphoid origin.

The protein resides in the cell membrane. The protein localises to the early endosome membrane. It localises to the recycling endosome membrane. Plays a critical role in induction and maintenance of immune tolerance to self. As a ligand for the inhibitory receptor PDCD1/PD-1, modulates the activation threshold of T-cells and limits T-cell effector response. Through a yet unknown activating receptor, may costimulate T-cell subsets that predominantly produce interleukin-10 (IL10). Functionally, the PDCD1-mediated inhibitory pathway is exploited by tumors to attenuate anti-tumor immunity and escape destruction by the immune system, thereby facilitating tumor survival. The interaction with PDCD1/PD-1 inhibits cytotoxic T lymphocytes (CTLs) effector function. The blockage of the PDCD1-mediated pathway results in the reversal of the exhausted T-cell phenotype and the normalization of the anti-tumor response, providing a rationale for cancer immunotherapy. The protein is Programmed cell death 1 ligand 1 (Cd274) of Mus musculus (Mouse).